The sequence spans 87 residues: Selenoprotein W (87 aa).

Positions 10–13 form a cross-link, cysteinyl-selenocysteine (Cys-Sec); redox-active; sequence CGAU. Residue Sec13 is a non-standard amino acid, selenocysteine. Cys37 carries the post-translational modification S-glutathionyl cysteine.

The protein belongs to the SelWTH family. Selenoprotein W subfamily. As to quaternary structure, interacts with DPYSL2, PRDX1, YWHAB, YWHAG, HSP70 and HSP90.

The protein resides in the cytoplasm. Functionally, plays a role as a glutathione (GSH)-dependent antioxidant. May be involved in a redox-related process. May play a role in the myopathies of selenium deficiency. The polypeptide is Selenoprotein W (Sus scrofa (Pig)).